Here is a 605-residue protein sequence, read N- to C-terminus: MVQAPSVYVCGFVERPDAPPKDACLHLDPLTVKSQLPLKKPLPLTVEHLPDAPVGSVFGLYQSRAGLFSAASITSGDFLSLLDSIYHDCDIAQSQRLPLPREPKVEALHAWLPSLSLASLHPDIPQTTADGGKLSFFDHVSICALGRRRGTTAVYGTDLAWVLKHFSDLEPSIAAQIENDANAAKRESGCPEDHPLPLTKLIAKAIDAGFLRNRVETLRQDRGVANIPAESYLKASDAPDLQKPDKALQSPPPASTDPATMLSGNAGEGATACGGSAAAGQDLISVPRNTFMTLLQTNLDNKPPRQTPLPYAAPLPPFSHQAIATAPSYGPGAGAVAPAGGYFTSPGGYYAGPAGGDPGAFLAMDAHTYHPHPHPPPAYFGLPGLFGPPPPVPPYYGSHLRADYVPAPSRSNKRKRDPEEDEEGGGLFPGEDATLYRKDIAGLSKSVNELQHTLQALRRETLSYGHTGVGYCPQQGPCYTHSGPYGFQPHQSYEVPRYVPHPPPPPTSHQAAQAQPPPPGTQAPEAHCVAESTIPEAGAAGNSGPREDTNPQQPTTEGHHRGKKLVQASASGVAQSKEPTTPKAKSVSAHLKSIFCEELLNKRVA.

Active-site charge relay system residues include histidine 48, serine 116, and histidine 139. Positions 235 to 274 (ASDAPDLQKPDKALQSPPPASTDPATMLSGNAGEGATACG) are disordered. The tract at residues 281–300 (QDLISVPRNTFMTLLQTNLD) is interaction with pAP. Disordered regions lie at residues 403 to 432 (DYVP…PGED) and 489 to 588 (PHQS…KSVS). The Nuclear localization signal motif lies at 410 to 416 (RSNKRKR). Residues 568–579 (ASASGVAQSKEP) show a composition bias toward polar residues. The interval 585-605 (KSVSAHLKSIFCEELLNKRVA) is interaction with major capsid protein.

It belongs to the herpesviridae capsid scaffolding protein family. Homomultimer. Interacts with major capsid protein. As to quaternary structure, exists in a monomer-dimer equilibrium with the dimer being the active species. Post-translationally, capsid scaffolding protein is cleaved by assemblin after formation of the spherical procapsid. As a result, the capsid obtains its mature, icosahedral shape. Cleavages occur at two or more sites: release (R-site) and maturation (M-site).

It localises to the host cytoplasm. It is found in the host nucleus. The catalysed reaction is Cleaves -Ala-|-Ser- and -Ala-|-Ala- bonds in the scaffold protein.. Functionally, acts as a scaffold protein by binding major capsid protein in the cytoplasm, inducing the nuclear localization of both proteins. Multimerizes in the nucleus such as major capsid protein forms the icosahedral T=16 capsid. Autocatalytic cleavage releases the assembly protein, and subsequently abolishes interaction with major capsid protein. Cleavages products are evicted from the capsid before or during DNA packaging. Protease that plays an essential role in virion assembly within the nucleus. Catalyzes the cleavage of the assembly protein after formation of the spherical procapsid. By that cleavage, the capsid matures and gains its icosahedral shape. The cleavage sites seem to include -Ala-Ser-, -Ala-Ala-, as well as Ala-Thr bonds. Assemblin and cleavages products are evicted from the capsid before or during DNA packaging. In terms of biological role, plays a major role in capsid assembly. Acts as a scaffold protein by binding major capsid protein. Multimerizes in the nucleus such as major capsid protein forms the icosahedral T=16 capsid. Cleaved by assemblin after capsid completion. The cleavages products are evicted from the capsid before or during DNA packaging. The polypeptide is Capsid scaffolding protein (Homo sapiens (Human)).